The following is a 936-amino-acid chain: Myocardin-related transcription factor A (936 aa).

3 RPEL repeats span residues 15–40, 59–84, and 103–128; these read TVLQ…PPLK, DYLK…EETS, and DDLN…PVET. A Bipartite Nuclear localization signal motif is present at residues 62–100; that stretch reads KRKIRSRPERAELVRMHILEETSAEPSLQAKQIKLKRAR. Disordered regions lie at residues 146-185, 234-258, and 401-422; these read SSFD…TQIP, SQPK…KVKK, and SQDP…QAKP. Polar residues predominate over residues 160 to 170; sequence QPASQESQGSI. The span at 239–254 shows a compositional bias: basic and acidic residues; sequence SFEKSQRIKKPKEPKP. Residues 368–402 form the SAP domain; it reads LDEMKVAELKLELKHRGLPVSGTKIDLIERLKASQ. Residues 404–416 show a composition bias toward low complexity; it reads PSTATAASAKPTP. The stretch at 497 to 542 forms a coiled coil; that stretch reads DARDKDLMLREKDRQIEELTQRLKQKQELVERLRQQLEQEKRTPQH. Positions 707–755 are disordered; the sequence is HNESPATPPQQPEPEPPPHSIFLTHSSPQWSKNPPGYDEAMKQQPNSCE. A compositionally biased stretch (pro residues) spans 712-725; that stretch reads ATPPQQPEPEPPPH. Residues 729–738 are compositionally biased toward polar residues; the sequence is LTHSSPQWSK.

Interacts with srf, forming the srf-mrtfa nuclear complex which binds the 5'-CArG-3' consensus motif (CArG box) on DNA via srf. Interacts (via RPEL repeats) with globular actin (G-actin), thereby regulating its subcellular location and activity of the complex formed with srf.

It is found in the cytoplasm. The protein resides in the nucleus. Transcription coactivator that associates with the serum response factor (srf) transcription factor to control expression of genes regulating the cytoskeleton during development, morphogenesis and cell migration. The srf-mrtfa complex activity responds to Rho GTPase-induced changes in cellular globular actin (G-actin) concentration, thereby coupling cytoskeletal gene expression to cytoskeletal dynamics. Mrtfa binds G-actin via its RPEL repeats, regulating activity of the mrtfa-srf complex. Activity is also regulated by filamentous actin (F-actin) in the nucleus. The chain is Myocardin-related transcription factor A (mrtfa) from Xenopus laevis (African clawed frog).